Here is a 143-residue protein sequence, read N- to C-terminus: MKINLIAVGKLEKEYLNLYLSYLKKISFFATINLIEIKEINEKNIDLKKQKETELIIEKIPKNSKVYLCSLQGQEKTSEDFSLLFNEDNLTFVIGGSNGVDESTFLHKISFSKNTFPHQLFRILLVEQIYRSFTILKGIKYHK.

Residues L68 and G95 each coordinate S-adenosyl-L-methionine.

Belongs to the RNA methyltransferase RlmH family. Homodimer.

It localises to the cytoplasm. It carries out the reaction pseudouridine(1915) in 23S rRNA + S-adenosyl-L-methionine = N(3)-methylpseudouridine(1915) in 23S rRNA + S-adenosyl-L-homocysteine + H(+). Functionally, specifically methylates the pseudouridine at position 1915 (m3Psi1915) in 23S rRNA. The polypeptide is Ribosomal RNA large subunit methyltransferase H (Mycoplasma mobile (strain ATCC 43663 / 163K / NCTC 11711) (Mesomycoplasma mobile)).